The following is a 131-amino-acid chain: Fluoride-specific ion channel FluC 2 (131 aa).

Transmembrane regions (helical) follow at residues 4–24, 46–66, 71–91, and 105–125; these read IIQG…ARFW, VSGA…HGVF, PWLF…SFAL, and AISN…LGFA. Na(+) contacts are provided by Gly81 and Thr84.

Belongs to the fluoride channel Fluc/FEX (TC 1.A.43) family.

The protein resides in the cell inner membrane. It catalyses the reaction fluoride(in) = fluoride(out). Its activity is regulated as follows. Na(+) is not transported, but it plays an essential structural role and its presence is essential for fluoride channel function. Functionally, fluoride-specific ion channel. Important for reducing fluoride concentration in the cell, thus reducing its toxicity. This Rhodopseudomonas palustris (strain BisB18) protein is Fluoride-specific ion channel FluC 2.